A 296-amino-acid chain; its full sequence is Cytidine deaminase (296 aa).

2 CMP/dCMP-type deaminase domains span residues 47-167 and 186-296; these read ELNE…FGPS and DSND…VEPE. A substrate-binding site is contributed by 88–90; the sequence is NIE. H101 contacts Zn(2+). Residue E103 is the Proton donor of the active site. C128 and C131 together coordinate Zn(2+).

Belongs to the cytidine and deoxycytidylate deaminase family. Homodimer. Zn(2+) is required as a cofactor.

It carries out the reaction cytidine + H2O + H(+) = uridine + NH4(+). The catalysed reaction is 2'-deoxycytidine + H2O + H(+) = 2'-deoxyuridine + NH4(+). This enzyme scavenges exogenous and endogenous cytidine and 2'-deoxycytidine for UMP synthesis. The chain is Cytidine deaminase from Shewanella halifaxensis (strain HAW-EB4).